The sequence spans 120 residues: Large ribosomal subunit protein uL18 (120 aa).

It belongs to the universal ribosomal protein uL18 family. As to quaternary structure, part of the 50S ribosomal subunit; part of the 5S rRNA/L5/L18/L25 subcomplex. Contacts the 5S and 23S rRNAs.

Functionally, this is one of the proteins that bind and probably mediate the attachment of the 5S RNA into the large ribosomal subunit, where it forms part of the central protuberance. In Clostridium botulinum (strain Eklund 17B / Type B), this protein is Large ribosomal subunit protein uL18.